Here is a 267-residue protein sequence, read N- to C-terminus: Neuferricin (267 aa).

The N-terminal stretch at Met1–Thr17 is a signal peptide. A Cytochrome b5 heme-binding domain is found at Leu53 to Ile150.

Belongs to the cytochrome b5 family. MAPR subfamily.

Its subcellular location is the secreted. Functionally, heme-binding protein which promotes neuronal but not astrocyte differentiation. The sequence is that of Neuferricin (cyb5d2) from Danio rerio (Zebrafish).